The chain runs to 215 residues: Cytochrome b6 (215 aa).

The chain crosses the membrane as a helical span at residues 32–52; the sequence is IFYCLGGITLTCFIVQVATGF. Cys35 serves as a coordination point for heme c. Positions 86 and 100 each coordinate heme b. Transmembrane regions (helical) follow at residues 90–110, 116–136, and 186–206; these read ASMM…TGGF, LTWI…VTGY, and LHTF…FLMI. Heme b contacts are provided by His187 and His202.

It belongs to the cytochrome b family. PetB subfamily. The 4 large subunits of the cytochrome b6-f complex are cytochrome b6, subunit IV (17 kDa polypeptide, PetD), cytochrome f and the Rieske protein, while the 4 small subunits are PetG, PetL, PetM and PetN. The complex functions as a dimer. Heme b is required as a cofactor. The cofactor is heme c.

The protein localises to the plastid. It is found in the chloroplast thylakoid membrane. Functionally, component of the cytochrome b6-f complex, which mediates electron transfer between photosystem II (PSII) and photosystem I (PSI), cyclic electron flow around PSI, and state transitions. The sequence is that of Cytochrome b6 from Chara vulgaris (Common stonewort).